The primary structure comprises 217 residues: Enolase-phosphatase E1 (217 aa).

Aspartate 9 and glutamate 11 together coordinate Mg(2+). Substrate is bound by residues 112-113 (SS) and lysine 151. Position 176 (aspartate 176) interacts with Mg(2+).

This sequence belongs to the HAD-like hydrolase superfamily. MasA/MtnC family. As to quaternary structure, monomer. Mg(2+) serves as cofactor.

It localises to the cytoplasm. The protein resides in the nucleus. The enzyme catalyses 5-methylsulfanyl-2,3-dioxopentyl phosphate + H2O = 1,2-dihydroxy-5-(methylsulfanyl)pent-1-en-3-one + phosphate. It functions in the pathway amino-acid biosynthesis; L-methionine biosynthesis via salvage pathway; L-methionine from S-methyl-5-thio-alpha-D-ribose 1-phosphate: step 3/6. The protein operates within amino-acid biosynthesis; L-methionine biosynthesis via salvage pathway; L-methionine from S-methyl-5-thio-alpha-D-ribose 1-phosphate: step 4/6. Its function is as follows. Bifunctional enzyme that catalyzes the enolization of 2,3-diketo-5-methylthiopentyl-1-phosphate (DK-MTP-1-P) into the intermediate 2-hydroxy-3-keto-5-methylthiopentenyl-1-phosphate (HK-MTPenyl-1-P), which is then dephosphorylated to form the acireductone 1,2-dihydroxy-3-keto-5-methylthiopentene (DHK-MTPene). The polypeptide is Enolase-phosphatase E1 (Lachancea thermotolerans (strain ATCC 56472 / CBS 6340 / NRRL Y-8284) (Yeast)).